The chain runs to 404 residues: S-adenosylmethionine synthase (404 aa).

His17 contacts ATP. Asp19 serves as a coordination point for Mg(2+). Glu45 serves as a coordination point for K(+). The L-methionine site is built by Glu58 and Gln101. Residues Gln101–Arg111 are flexible loop. ATP contacts are provided by residues Asp172–Lys174, Arg245–Phe246, Asp254, Arg260–Lys261, Ala277, and Lys281. Asp254 is an L-methionine binding site. Lys285 contributes to the L-methionine binding site.

Belongs to the AdoMet synthase family. As to quaternary structure, homotetramer; dimer of dimers. It depends on Mg(2+) as a cofactor. The cofactor is K(+).

The protein localises to the cytoplasm. The catalysed reaction is L-methionine + ATP + H2O = S-adenosyl-L-methionine + phosphate + diphosphate. It functions in the pathway amino-acid biosynthesis; S-adenosyl-L-methionine biosynthesis; S-adenosyl-L-methionine from L-methionine: step 1/1. In terms of biological role, catalyzes the formation of S-adenosylmethionine (AdoMet) from methionine and ATP. The overall synthetic reaction is composed of two sequential steps, AdoMet formation and the subsequent tripolyphosphate hydrolysis which occurs prior to release of AdoMet from the enzyme. The protein is S-adenosylmethionine synthase of Chlorobium luteolum (strain DSM 273 / BCRC 81028 / 2530) (Pelodictyon luteolum).